We begin with the raw amino-acid sequence, 188 residues long: ATP-dependent protease subunit HslV (188 aa).

The active site involves T7. 3 residues coordinate Na(+): G162, C165, and S168.

This sequence belongs to the peptidase T1B family. HslV subfamily. In terms of assembly, a double ring-shaped homohexamer of HslV is capped on each side by a ring-shaped HslU homohexamer. The assembly of the HslU/HslV complex is dependent on binding of ATP.

Its subcellular location is the cytoplasm. The catalysed reaction is ATP-dependent cleavage of peptide bonds with broad specificity.. Its activity is regulated as follows. Allosterically activated by HslU binding. In terms of biological role, protease subunit of a proteasome-like degradation complex believed to be a general protein degrading machinery. The chain is ATP-dependent protease subunit HslV from Thiobacillus denitrificans (strain ATCC 25259 / T1).